A 200-amino-acid polypeptide reads, in one-letter code: NADH-quinone oxidoreductase subunit C (200 aa).

It belongs to the complex I 30 kDa subunit family. NDH-1 is composed of 14 different subunits. Subunits NuoB, C, D, E, F, and G constitute the peripheral sector of the complex.

The protein resides in the cell inner membrane. It catalyses the reaction a quinone + NADH + 5 H(+)(in) = a quinol + NAD(+) + 4 H(+)(out). NDH-1 shuttles electrons from NADH, via FMN and iron-sulfur (Fe-S) centers, to quinones in the respiratory chain. The immediate electron acceptor for the enzyme in this species is believed to be ubiquinone. Couples the redox reaction to proton translocation (for every two electrons transferred, four hydrogen ions are translocated across the cytoplasmic membrane), and thus conserves the redox energy in a proton gradient. This is NADH-quinone oxidoreductase subunit C from Burkholderia mallei (strain NCTC 10247).